Here is a 174-residue protein sequence, read N- to C-terminus: Probable E3 ubiquitin-protein ligase RHA4A (174 aa).

The segment at 105 to 147 (CCVCLGEFELKEELVEMPLCKHIFHLDCIHLWLYSHNTCPLCR) adopts an RING-type; atypical zinc-finger fold. Residues 155-174 (TKTSVDDDNDHPDSPQTSPV) are disordered.

In terms of tissue distribution, expressed in stems, flowers, cauline leaves and roots.

The enzyme catalyses S-ubiquitinyl-[E2 ubiquitin-conjugating enzyme]-L-cysteine + [acceptor protein]-L-lysine = [E2 ubiquitin-conjugating enzyme]-L-cysteine + N(6)-ubiquitinyl-[acceptor protein]-L-lysine.. It participates in protein modification; protein ubiquitination. Its function is as follows. Probable E3 ubiquitin-protein ligase that may possess E3 ubiquitin ligase activity in vitro. The chain is Probable E3 ubiquitin-protein ligase RHA4A from Arabidopsis thaliana (Mouse-ear cress).